A 427-amino-acid chain; its full sequence is Peptidyl-prolyl cis-trans isomerase sig-7 (427 aa).

In terms of domain architecture, PPIase cyclophilin-type spans 6–161 (ETTLGDLIID…KDIRISHTIV (156 aa)). Positions 195-227 (DEKEDEDEGKTAEEIAEELQQREMAEQAQILEM) form a coiled coil. The RRM domain maps to 241–319 (NVLFVCKLNP…RRIHVDFSQS (79 aa)). Residues 322–334 (QNYKYKPKSQQQE) are compositionally biased toward polar residues. The segment at 322-427 (QNYKYKPKSQ…RSPDRRRDRR (106 aa)) is disordered. A compositionally biased stretch (basic residues) spans 351-370 (SHQRSPSPRRRRSPSPKKDK). Residues 384 to 427 (SSDNHRDRDRSYRDNNRDRRDNHRDSDRDRRRHDRSPDRRRDRR) are compositionally biased toward basic and acidic residues.

This sequence belongs to the cyclophilin-type PPIase family. PPIL4 subfamily. In terms of assembly, interacts with ama-1, the catalytic subunit of the RNA polymerase II (RNA pol II) complex. In terms of tissue distribution, ubiquitous.

The protein localises to the nucleus. Its subcellular location is the nucleoplasm. It localises to the chromosome. It carries out the reaction [protein]-peptidylproline (omega=180) = [protein]-peptidylproline (omega=0). Its function is as follows. Probable PPIase that accelerates the folding of proteins. It catalyzes the cis-trans isomerization of proline imidic peptide bonds in oligopeptides. Involved in RNA polymerase II (RNA pol II)-mediated transcription elongation, and in primary transcript splicing, including co-transcriptional trans-splicing, in association with the catalytic subunit of the RNA pol II complex ama-1. Also plays a role in the regulation of elongation-dependent phosphorylation of ama-1 to control transcription. Involved in the transcription of several genes during embryogenesis and in particular, of genes related to developmental processes such as gastrulation, and also regulates transcription in germ cells from embryogenesis to adulthood. The chain is Peptidyl-prolyl cis-trans isomerase sig-7 from Caenorhabditis elegans.